The primary structure comprises 399 residues: 4-hydroxy-3-methylbut-2-enyl diphosphate reductase (399 aa).

[4Fe-4S] cluster is bound at residue Cys66. His96 lines the (2E)-4-hydroxy-3-methylbut-2-enyl diphosphate pocket. A dimethylallyl diphosphate-binding site is contributed by His96. An isopentenyl diphosphate-binding site is contributed by His96. Cys157 serves as a coordination point for [4Fe-4S] cluster. His185 is a binding site for (2E)-4-hydroxy-3-methylbut-2-enyl diphosphate. His185 serves as a coordination point for dimethylallyl diphosphate. His185 contacts isopentenyl diphosphate. Glu187 acts as the Proton donor in catalysis. Thr250 serves as a coordination point for (2E)-4-hydroxy-3-methylbut-2-enyl diphosphate. Cys288 provides a ligand contact to [4Fe-4S] cluster. (2E)-4-hydroxy-3-methylbut-2-enyl diphosphate-binding residues include Ser317, Ser318, Asn319, and Ser380. Ser317, Ser318, Asn319, and Ser380 together coordinate dimethylallyl diphosphate. The isopentenyl diphosphate site is built by Ser317, Ser318, Asn319, and Ser380.

This sequence belongs to the IspH family. Requires [4Fe-4S] cluster as cofactor.

It carries out the reaction isopentenyl diphosphate + 2 oxidized [2Fe-2S]-[ferredoxin] + H2O = (2E)-4-hydroxy-3-methylbut-2-enyl diphosphate + 2 reduced [2Fe-2S]-[ferredoxin] + 2 H(+). The enzyme catalyses dimethylallyl diphosphate + 2 oxidized [2Fe-2S]-[ferredoxin] + H2O = (2E)-4-hydroxy-3-methylbut-2-enyl diphosphate + 2 reduced [2Fe-2S]-[ferredoxin] + 2 H(+). It participates in isoprenoid biosynthesis; dimethylallyl diphosphate biosynthesis; dimethylallyl diphosphate from (2E)-4-hydroxy-3-methylbutenyl diphosphate: step 1/1. Its pathway is isoprenoid biosynthesis; isopentenyl diphosphate biosynthesis via DXP pathway; isopentenyl diphosphate from 1-deoxy-D-xylulose 5-phosphate: step 6/6. Its function is as follows. Catalyzes the conversion of 1-hydroxy-2-methyl-2-(E)-butenyl 4-diphosphate (HMBPP) into a mixture of isopentenyl diphosphate (IPP) and dimethylallyl diphosphate (DMAPP). Acts in the terminal step of the DOXP/MEP pathway for isoprenoid precursor biosynthesis. This is 4-hydroxy-3-methylbut-2-enyl diphosphate reductase from Parasynechococcus marenigrum (strain WH8102).